We begin with the raw amino-acid sequence, 125 residues long: Large ribosomal subunit protein bL20 (125 aa).

The protein belongs to the bacterial ribosomal protein bL20 family.

Functionally, binds directly to 23S ribosomal RNA and is necessary for the in vitro assembly process of the 50S ribosomal subunit. It is not involved in the protein synthesizing functions of that subunit. The protein is Large ribosomal subunit protein bL20 of Rhodospirillum rubrum (strain ATCC 11170 / ATH 1.1.1 / DSM 467 / LMG 4362 / NCIMB 8255 / S1).